The following is a 221-amino-acid chain: MQTKGGSRLMIANRISGNIISDTFSDGKLNVPIEFEWFEADKKRMRKVAADGTEFGVAVGATIADGDVLAETADKRYFARIRTAQLIEIPVHSMKEMGRLCFELGNRHLSLKVEDDRVLVPYDHPTMEYTKKIGFDPRVIEGGFDGFLIVKAHAGAGTIVPGTNKTTGDLAEEEQETERHEPHAHAIGEHHHEKSEYEVNGVLHRADGMHSHDHGQTWHMH.

Positions V160–K194 are disordered. Basic and acidic residues predominate over residues T177–K194.

This sequence belongs to the UreE family.

It is found in the cytoplasm. Its function is as follows. Involved in urease metallocenter assembly. Binds nickel. Probably functions as a nickel donor during metallocenter assembly. This chain is Urease accessory protein UreE, found in Bifidobacterium longum subsp. infantis (strain ATCC 15697 / DSM 20088 / JCM 1222 / NCTC 11817 / S12).